A 275-amino-acid polypeptide reads, in one-letter code: Formamidopyrimidine-DNA glycosylase (275 aa).

P2 (schiff-base intermediate with DNA) is an active-site residue. The active-site Proton donor is the E3. Residue K59 is the Proton donor; for beta-elimination activity of the active site. DNA-binding residues include H92, R111, and K155. An FPG-type zinc finger spans residues 240-274 (YVYGQTGEPCRRCGHEIEKMKLGGRGTHYCPHCQQ). R264 serves as the catalytic Proton donor; for delta-elimination activity.

The protein belongs to the FPG family. Monomer. Zn(2+) serves as cofactor.

It catalyses the reaction Hydrolysis of DNA containing ring-opened 7-methylguanine residues, releasing 2,6-diamino-4-hydroxy-5-(N-methyl)formamidopyrimidine.. The enzyme catalyses 2'-deoxyribonucleotide-(2'-deoxyribose 5'-phosphate)-2'-deoxyribonucleotide-DNA = a 3'-end 2'-deoxyribonucleotide-(2,3-dehydro-2,3-deoxyribose 5'-phosphate)-DNA + a 5'-end 5'-phospho-2'-deoxyribonucleoside-DNA + H(+). Its function is as follows. Involved in base excision repair of DNA damaged by oxidation or by mutagenic agents. Acts as a DNA glycosylase that recognizes and removes damaged bases. Has a preference for oxidized purines, such as 7,8-dihydro-8-oxoguanine (8-oxoG). Has AP (apurinic/apyrimidinic) lyase activity and introduces nicks in the DNA strand. Cleaves the DNA backbone by beta-delta elimination to generate a single-strand break at the site of the removed base with both 3'- and 5'-phosphates. The sequence is that of Formamidopyrimidine-DNA glycosylase from Exiguobacterium sp. (strain ATCC BAA-1283 / AT1b).